The primary structure comprises 90 residues: Small ribosomal subunit protein uS15 (90 aa).

Belongs to the universal ribosomal protein uS15 family. In terms of assembly, part of the 30S ribosomal subunit. Forms a bridge to the 50S subunit in the 70S ribosome, contacting the 23S rRNA.

Its function is as follows. One of the primary rRNA binding proteins, it binds directly to 16S rRNA where it helps nucleate assembly of the platform of the 30S subunit by binding and bridging several RNA helices of the 16S rRNA. Functionally, forms an intersubunit bridge (bridge B4) with the 23S rRNA of the 50S subunit in the ribosome. The polypeptide is Small ribosomal subunit protein uS15 (Wolbachia pipientis wMel).